The following is a 191-amino-acid chain: Probable GTP-binding protein EngB (191 aa).

An EngB-type G domain is found at 19–188; sequence NIPEICFMGR…HKKIFELFVE (170 aa). GTP is bound by residues 27-34, 53-57, 70-73, 136-139, and 167-169; these read GRSNVGKS, GRTQL, DLPG, NKFD, and AST. Ser-34 and Thr-55 together coordinate Mg(2+).

It belongs to the TRAFAC class TrmE-Era-EngA-EngB-Septin-like GTPase superfamily. EngB GTPase family. Requires Mg(2+) as cofactor.

Its function is as follows. Necessary for normal cell division and for the maintenance of normal septation. The chain is Probable GTP-binding protein EngB from Mycoplasma genitalium (strain ATCC 33530 / DSM 19775 / NCTC 10195 / G37) (Mycoplasmoides genitalium).